Consider the following 156-residue polypeptide: Large ribosomal subunit protein uL15 (156 aa).

Residues 1–13 (MKLNEIKDNEGAT) show a composition bias toward basic and acidic residues. The segment at 1 to 39 (MKLNEIKDNEGATKNRKRLGRGIGSGSGKTAGRGVKGQK) is disordered. Positions 21-35 (RGIGSGSGKTAGRGV) are enriched in gly residues.

It belongs to the universal ribosomal protein uL15 family. Part of the 50S ribosomal subunit.

Functionally, binds to the 23S rRNA. This is Large ribosomal subunit protein uL15 from Rhizobium meliloti (strain 1021) (Ensifer meliloti).